The sequence spans 360 residues: Phosphoserine aminotransferase (360 aa).

Position 42 (R42) interacts with L-glutamate. Pyridoxal 5'-phosphate-binding residues include W102, T152, D171, and Q194. An N6-(pyridoxal phosphate)lysine modification is found at K195. 237–238 contacts pyridoxal 5'-phosphate; that stretch reads NT.

This sequence belongs to the class-V pyridoxal-phosphate-dependent aminotransferase family. SerC subfamily. As to quaternary structure, homodimer. It depends on pyridoxal 5'-phosphate as a cofactor.

The protein localises to the cytoplasm. The enzyme catalyses O-phospho-L-serine + 2-oxoglutarate = 3-phosphooxypyruvate + L-glutamate. It catalyses the reaction 4-(phosphooxy)-L-threonine + 2-oxoglutarate = (R)-3-hydroxy-2-oxo-4-phosphooxybutanoate + L-glutamate. It functions in the pathway amino-acid biosynthesis; L-serine biosynthesis; L-serine from 3-phospho-D-glycerate: step 2/3. Its pathway is cofactor biosynthesis; pyridoxine 5'-phosphate biosynthesis; pyridoxine 5'-phosphate from D-erythrose 4-phosphate: step 3/5. Functionally, catalyzes the reversible conversion of 3-phosphohydroxypyruvate to phosphoserine and of 3-hydroxy-2-oxo-4-phosphonooxybutanoate to phosphohydroxythreonine. The chain is Phosphoserine aminotransferase from Coxiella burnetii (strain CbuK_Q154) (Coxiella burnetii (strain Q154)).